Here is a 282-residue protein sequence, read N- to C-terminus: HTH-type transcriptional activator RhaR (282 aa).

One can recognise an HTH araC/xylS-type domain in the interval 179–277 (DKLITALANS…GMTPSQWRHL (99 aa)). DNA-binding regions (H-T-H motif) lie at residues 196-217 (DAFCQQEQCSERVLRQQFRAQT) and 244-267 (VSEISMQCGFEDSNYFSVVFTRET).

As to quaternary structure, binds DNA as a dimer.

It localises to the cytoplasm. Activates expression of the rhaSR operon in response to L-rhamnose. In Salmonella typhi, this protein is HTH-type transcriptional activator RhaR.